Consider the following 779-residue polypeptide: Phosphoribosylformylglycinamidine synthase subunit PurL (779 aa).

His-52 is an active-site residue. The ATP site is built by Tyr-55 and Lys-94. Glu-96 contacts Mg(2+). Substrate-binding positions include 97 to 100 and Arg-119; that span reads SHNH. His-98 (proton acceptor) is an active-site residue. Asp-120 contributes to the Mg(2+) binding site. Substrate is bound at residue Gln-243. Mg(2+) is bound at residue Asp-271. Substrate is bound at residue 315 to 317; it reads ESQ. Residues Asn-523 and Gly-560 each contribute to the ATP site. Asn-561 contributes to the Mg(2+) binding site. Position 563 (Ser-563) interacts with substrate.

It belongs to the FGAMS family. As to quaternary structure, monomer. Part of the FGAM synthase complex composed of 1 PurL, 1 PurQ and 2 PurS subunits.

Its subcellular location is the cytoplasm. The enzyme catalyses N(2)-formyl-N(1)-(5-phospho-beta-D-ribosyl)glycinamide + L-glutamine + ATP + H2O = 2-formamido-N(1)-(5-O-phospho-beta-D-ribosyl)acetamidine + L-glutamate + ADP + phosphate + H(+). It participates in purine metabolism; IMP biosynthesis via de novo pathway; 5-amino-1-(5-phospho-D-ribosyl)imidazole from N(2)-formyl-N(1)-(5-phospho-D-ribosyl)glycinamide: step 1/2. In terms of biological role, part of the phosphoribosylformylglycinamidine synthase complex involved in the purines biosynthetic pathway. Catalyzes the ATP-dependent conversion of formylglycinamide ribonucleotide (FGAR) and glutamine to yield formylglycinamidine ribonucleotide (FGAM) and glutamate. The FGAM synthase complex is composed of three subunits. PurQ produces an ammonia molecule by converting glutamine to glutamate. PurL transfers the ammonia molecule to FGAR to form FGAM in an ATP-dependent manner. PurS interacts with PurQ and PurL and is thought to assist in the transfer of the ammonia molecule from PurQ to PurL. This chain is Phosphoribosylformylglycinamidine synthase subunit PurL, found in Prochlorococcus marinus (strain MIT 9215).